Here is a 243-residue protein sequence, read N- to C-terminus: Probable 2-phosphosulfolactate phosphatase (243 aa).

The protein belongs to the ComB family. Mg(2+) is required as a cofactor.

It carries out the reaction (2R)-O-phospho-3-sulfolactate + H2O = (2R)-3-sulfolactate + phosphate. This chain is Probable 2-phosphosulfolactate phosphatase, found in Synechococcus sp. (strain CC9605).